A 458-amino-acid polypeptide reads, in one-letter code: MIVPVLSRQALRHASVARVALPSLTRWYASYPPHTVVKMPALSPTMTSGGIGAWQKKPGDKIEPGEVLVEIETDKAQMDFEFQEEGVLAKILKDSGEKDVAVGNPIAILVEEGTDVNAFKDFTLKDAGGETSPAVPKDEPKNESTASAPTPAPTPAPEPENTSFTGRFQTALEREPNALPAAKRLAREKGIDLRNVKGSGPGGKITEEDVKKALASAPAAGAAAAAYTDVPISGMRKTIAARLKESVTENPHFFVSTNLSVSKLLKLRQALNSSADGRYKLSVNDFLIKAMGIASKRVPTVNSSWRDGVIRQFETVDVSVAVATPNGLITPIVKGVEGKGLESISAAVKELAKKARDGKLKPEEYQGGSISISNMGMNPAVQSFTAIINPPQAAILAVGAPQKVAVPVENEDGTTGVSWDEQIIVTASFDHKVVDGAVGAEWIRELKKVIENPLELLL.

The N-terminal 28 residues, 1 to 28 (MIVPVLSRQALRHASVARVALPSLTRWY), are a transit peptide targeting the mitochondrion. One can recognise a Lipoyl-binding domain in the interval 34 to 110 (HTVVKMPALS…AVGNPIAILV (77 aa)). Residue K75 is modified to N6-lipoyllysine. Residues 126-164 (DAGGETSPAVPKDEPKNESTASAPTPAPTPAPEPENTSF) form a disordered region. The region spanning 177–214 (NALPAAKRLAREKGIDLRNVKGSGPGGKITEEDVKKAL) is the Peripheral subunit-binding (PSBD) domain. Residues H431 and D435 contribute to the active site.

It belongs to the 2-oxoacid dehydrogenase family. Requires (R)-lipoate as cofactor.

The protein localises to the mitochondrion matrix. The catalysed reaction is N(6)-[(R)-dihydrolipoyl]-L-lysyl-[protein] + acetyl-CoA = N(6)-[(R)-S(8)-acetyldihydrolipoyl]-L-lysyl-[protein] + CoA. Functionally, the pyruvate dehydrogenase complex catalyzes the overall conversion of pyruvate to acetyl-CoA and CO(2). It contains multiple copies of three enzymatic components: pyruvate dehydrogenase (E1), dihydrolipoamide acetyltransferase (E2) and lipoamide dehydrogenase (E3). This chain is Dihydrolipoyllysine-residue acetyltransferase component of pyruvate dehydrogenase complex, mitochondrial (mrp-3), found in Neurospora crassa (strain ATCC 24698 / 74-OR23-1A / CBS 708.71 / DSM 1257 / FGSC 987).